A 66-amino-acid polypeptide reads, in one-letter code: Regulator of G-protein signaling 11 (66 aa).

The 66-residue stretch at 1–66 (EACEELRFGG…DAAQLHIYML (66 aa)) folds into the RGS domain.

As to quaternary structure, heterodimer with Gbeta5. Interacts with RGS7BP, leading to regulate the subcellular location of the heterodimer formed with Gbeta5.

In terms of biological role, inhibits signal transduction by increasing the GTPase activity of G protein alpha subunits thereby driving them into their inactive GDP-bound form. In Rattus norvegicus (Rat), this protein is Regulator of G-protein signaling 11 (Rgs11).